The primary structure comprises 588 residues: Acid beta-fructofuranosidase 1, vacuolar (588 aa).

Topologically, residues 1 to 31 are cytoplasmic; sequence MDTSTSAYAPLPGEDPLFSGHPPASLRRSWK. Residues 1-115 constitute a propeptide, removed in mature form; that stretch reads MDTSTSAYAP…LSYNWTNAMF (115 aa). Residues 32–52 form a helical; Signal-anchor for type II membrane protein membrane-spanning segment; the sequence is GFAVIFASVLFLLSLVGLIIH. Over 53–588 the chain is Lumenal; it reads QGPQQPPDVM…LRALRKEVGR (536 aa). Residues 57–86 are disordered; that stretch reads QPPDVMPDKQDEHHHPQSTTPASETTASWE. The segment covering 62–71 has biased composition (basic and acidic residues); it reads MPDKQDEHHH. The span at 73-84 shows a compositional bias: polar residues; the sequence is QSTTPASETTAS. Substrate-binding positions include 130–133, glutamine 149, and tryptophan 157; that span reads WMND. Aspartate 133 is an active-site residue. Residue asparagine 159 is glycosylated (N-linked (GlcNAc...) asparagine). Residue 192 to 193 participates in substrate binding; that stretch reads WS. Residue asparagine 226 is glycosylated (N-linked (GlcNAc...) asparagine). Residues 256 to 257, glutamate 311, and aspartate 344 each bind substrate; that span reads RD. Cysteines 499 and 545 form a disulfide.

Belongs to the glycosyl hydrolase 32 family. In terms of assembly, monomer. May be present in two forms, a 70 kDa monomer and a heterodimer of the 30 kDa and 38 kDa subunits. The ratio of the levels of the two forms within cells appears to be regulated developmentally. In terms of processing, glycosylated. As to expression, expressed in buds, stems, roots and leaves. Expressed in the epidermal cells of young leaves and of primordial leaves.

Its subcellular location is the membrane. It is found in the vacuole lumen. The enzyme catalyses Hydrolysis of terminal non-reducing beta-D-fructofuranoside residues in beta-D-fructofuranosides.. Acidic vacuolar invertase involved in light-induced bud burst. The polypeptide is Acid beta-fructofuranosidase 1, vacuolar (Rosa hybrid cultivar).